We begin with the raw amino-acid sequence, 21 residues long: Dart gland peptide (21 aa).

The tract at residues 1–21 (SINNTGGSGNRRLDKNGFAGQ) is disordered. A glycan (N-linked (GlcNAc...) asparagine) is linked at Asn-3.

The protein localises to the secreted. This is Dart gland peptide from Cornu aspersum (Brown garden snail).